An 89-amino-acid chain; its full sequence is Small ribosomal subunit protein uS17 (89 aa).

This sequence belongs to the universal ribosomal protein uS17 family. In terms of assembly, part of the 30S ribosomal subunit.

Functionally, one of the primary rRNA binding proteins, it binds specifically to the 5'-end of 16S ribosomal RNA. The chain is Small ribosomal subunit protein uS17 from Xanthomonas campestris pv. campestris (strain B100).